The sequence spans 60 residues: Large ribosomal subunit protein uL30 (60 aa).

It belongs to the universal ribosomal protein uL30 family. As to quaternary structure, part of the 50S ribosomal subunit.

The sequence is that of Large ribosomal subunit protein uL30 from Shewanella woodyi (strain ATCC 51908 / MS32).